The sequence spans 306 residues: Porphobilinogen deaminase (306 aa).

Cys-239 carries the post-translational modification S-(dipyrrolylmethanemethyl)cysteine.

It belongs to the HMBS family. In terms of assembly, monomer. It depends on dipyrromethane as a cofactor.

It carries out the reaction 4 porphobilinogen + H2O = hydroxymethylbilane + 4 NH4(+). The protein operates within porphyrin-containing compound metabolism; protoporphyrin-IX biosynthesis; coproporphyrinogen-III from 5-aminolevulinate: step 2/4. Its function is as follows. Tetrapolymerization of the monopyrrole PBG into the hydroxymethylbilane pre-uroporphyrinogen in several discrete steps. The protein is Porphobilinogen deaminase of Helicobacter pylori (strain P12).